The sequence spans 135 residues: MVQLTTIFCKAYHGGHLTIRLALGGCTNRPFYRIVAAHNKCPRDGRFVEQLGSYDPLPNSHGEKLVALNLDRIRHWIGCGAHLSKPMEKLLGLSGFFPLHPMMITNAERLRRRRAREVLLASQKAESEAKETEAS.

A mitochondrion-targeting transit peptide spans 1–34 (MVQLTTIFCKAYHGGHLTIRLALGGCTNRPFYRI).

The protein belongs to the bacterial ribosomal protein bS16 family. Component of the mitochondrial ribosome small subunit (28S) which comprises a 12S rRNA and about 30 distinct proteins.

The protein localises to the mitochondrion. In Mus musculus (Mouse), this protein is Small ribosomal subunit protein bS16m (Mrps16).